Here is a 452-residue protein sequence, read N- to C-terminus: Probable 1,4-beta-D-glucan cellobiohydrolase A (452 aa).

The first 17 residues, 1-17, serve as a signal peptide directing secretion; sequence MHQRALLFSALAVAANA. N-linked (GlcNAc...) asparagine glycosylation is present at Asn81. Glu226 acts as the Nucleophile in catalysis. The active-site Proton donor is the Glu231. A glycan (N-linked (GlcNAc...) asparagine) is linked at Asn284. The disordered stretch occupies residues 405-431; that stretch reads ADPSKPGVARGTCEHGAGDPENVESQH.

It belongs to the glycosyl hydrolase 7 (cellulase C) family.

It is found in the secreted. The catalysed reaction is Hydrolysis of (1-&gt;4)-beta-D-glucosidic linkages in cellulose and cellotetraose, releasing cellobiose from the non-reducing ends of the chains.. In terms of biological role, the biological conversion of cellulose to glucose generally requires three types of hydrolytic enzymes: (1) Endoglucanases which cut internal beta-1,4-glucosidic bonds; (2) Exocellobiohydrolases that cut the disaccharide cellobiose from the non-reducing end of the cellulose polymer chain; (3) Beta-1,4-glucosidases which hydrolyze the cellobiose and other short cello-oligosaccharides to glucose. This is Probable 1,4-beta-D-glucan cellobiohydrolase A (cbhA) from Aspergillus fumigatus (strain CBS 144.89 / FGSC A1163 / CEA10) (Neosartorya fumigata).